Here is a 432-residue protein sequence, read N- to C-terminus: Alpha-2 adrenergic receptor (432 aa).

At 1-32 the chain is on the extracellular side; that stretch reads MDPLNATGMDAFTAIHLNASWSADSGYSLAAI. N-linked (GlcNAc...) asparagine glycans are attached at residues asparagine 5 and asparagine 18. The helical transmembrane segment at 33 to 57 threads the bilayer; it reads ASIAALVSFLILFTVVGNILVVIAV. The Cytoplasmic segment spans residues 58–69; that stretch reads LTSRALKAPQNL. Residues 70-95 form a helical membrane-spanning segment; it reads FLVSLATADILVATLVMPFSLANELM. Residues 96–105 are Extracellular-facing; the sequence is GYWYFGKVWC. Residues cysteine 105 and cysteine 183 are joined by a disulfide bond. The chain crosses the membrane as a helical span at residues 106 to 128; the sequence is GIYLALDVLFCTSSIVHLCAISL. Residues 129 to 149 lie on the Cytoplasmic side of the membrane; the sequence is DRYWSVTQAVEYNLKRTPKRV. A helical transmembrane segment spans residues 150–172; that stretch reads KCIIVIVWLISAFISSPPLLSID. The Extracellular segment spans residues 173-188; the sequence is SNNYISSQPQCMLNDD. Residues 189–212 form a helical membrane-spanning segment; the sequence is TWYILSSSMASFFAPCLIMILVYI. Over 213–356 the chain is Cytoplasmic; it reads RIYQVAKTRT…QAREKRFTFV (144 aa). The disordered stretch occupies residues 222 to 319; that stretch reads TRSMSGKEPR…SISKQSARIS (98 aa). Composition is skewed to polar residues over residues 235-246 and 265-275; these read VTQTENGLNKAN and SQRTVTIGQQT. Over residues 288-300 the composition is skewed to basic and acidic residues; the sequence is GKGHKPQRQDSQR. A compositionally biased stretch (polar residues) spans 309 to 319; it reads SSISKQSARIS. Residues 357 to 380 traverse the membrane as a helical segment; that stretch reads LAVVMGVFVVCWFPFFFSYSLHAV. Topologically, residues 381 to 393 are extracellular; that stretch reads CRDYCKIPDTLFK. The chain crosses the membrane as a helical span at residues 394-413; sequence FFWIGYCNSSLNPAIYTIFN. Topologically, residues 414–432 are cytoplasmic; that stretch reads RDFRRAFQKILCKSWKKSF.

The protein belongs to the G-protein coupled receptor 1 family.

Its subcellular location is the cell membrane. Functionally, alpha-2 adrenergic receptors mediate the catecholamine-induced inhibition of adenylate cyclase through the action of G proteins. The polypeptide is Alpha-2 adrenergic receptor (Labrus ossifagus (Cuckoo wrasse)).